A 708-amino-acid chain; its full sequence is O-antigen chain terminator bifunctional methyltransferase/kinase WbdD (708 aa).

Residues 1–210 (MTKDLNTLVS…VPRPMYLVSN (210 aa)) are methyltransferase. S-adenosyl-L-methionine is bound by residues 16-17 (YQ), R36, G61, 82-87 (DFQQEN), 108-111 (GRIE), and L128. Positions 211-459 (HRVLINDFNQ…AKLPSAEQQR (249 aa)) are kinase. Residues P229, H237, 241-243 (RRY), K252, E274, 309-311 (EKL), M358, and D369 each bind ATP. The stretch at 485–594 (AGSEALRGQI…EIEKIHRSRS (110 aa)) forms a coiled coil. The segment at 601 to 669 (YRYLGLQIHL…RLYRRMNPLP (69 aa)) is required for membrane-binding. A required for localizing WbdA to the membrane region spans residues 687–708 (VMHPELLPPEVYEIYLKLTKNK).

It belongs to the WbdD family. As to quaternary structure, interacts with WbdA.

The protein resides in the cell inner membrane. The enzyme catalyses 3-O-phospho-alpha-D-Man-(1-&gt;2)-alpha-D-Man-(1-&gt;2)-[alpha-D-Man-(1-&gt;3)-alpha-D-Man-(1-&gt;3)-alpha-D-Man-(1-&gt;2)-alpha-D-Man-(1-&gt;2)](n)-alpha-D-Man-(1-&gt;3)-alpha-D-Man-(1-&gt;3)-alpha-D-Man-(1-&gt;3)-alpha-D-GlcNAc-di-trans,octa-cis-undecaprenyl diphosphate + S-adenosyl-L-methionine = 3-O-methylphospho-alpha-D-Man-(1-&gt;2)-alpha-D-Man-(1-&gt;2)-[alpha-D-Man-(1-&gt;3)-alpha-D-Man-(1-&gt;3)-alpha-D-Man-(1-&gt;2)-alpha-D-Man-(1-&gt;2)](n)-alpha-D-Man-(1-&gt;3)-alpha-D-Man-(1-&gt;3)-alpha-D-Man-(1-&gt;3)-alpha-D-GlcNAc-di-trans,octa-cis-undecaprenyl diphosphate + S-adenosyl-L-homocysteine. It catalyses the reaction alpha-D-Man-(1-&gt;2)-alpha-D-Man-(1-&gt;2)-[alpha-D-Man-(1-&gt;3)-alpha-D-Man-(1-&gt;3)-alpha-D-Man-(1-&gt;2)-alpha-D-Man-(1-&gt;2)](n)-alpha-D-Man-(1-&gt;3)-alpha-D-Man-(1-&gt;3)-alpha-D-Man-(1-&gt;3)-alpha-D-GlcNAc-di-trans,octa-cis-undecaprenyl diphosphate + ATP = 3-O-phospho-alpha-D-Man-(1-&gt;2)-alpha-D-Man-(1-&gt;2)-[alpha-D-Man-(1-&gt;3)-alpha-D-Man-(1-&gt;3)-alpha-D-Man-(1-&gt;2)-alpha-D-Man-(1-&gt;2)](n)-alpha-D-Man-(1-&gt;3)-alpha-D-Man-(1-&gt;3)-alpha-D-Man-(1-&gt;3)-alpha-D-GlcNAc-di-trans,octa-cis-undecaprenyl diphosphate + ADP + H(+). The protein operates within bacterial outer membrane biogenesis; LPS O-antigen biosynthesis. Regulates the length of the LPS O-antigen polysaccharide chain. Stops the polymerization of the chain by phosphorylating and then methylating the phosphate on the terminal sugar. This terminal modification is essential for export of the O-antigen across the inner membrane. WbdD is also required for correct localization of the WbdA mannosyltransferase. This is O-antigen chain terminator bifunctional methyltransferase/kinase WbdD from Escherichia coli.